Consider the following 297-residue polypeptide: Phosphatidylserine decarboxylase proenzyme (297 aa).

Active-site charge relay system; for autoendoproteolytic cleavage activity residues include D112, H168, and S255. Catalysis depends on S255, which acts as the Schiff-base intermediate with substrate; via pyruvic acid; for decarboxylase activity. S255 carries the pyruvic acid (Ser); by autocatalysis modification.

It belongs to the phosphatidylserine decarboxylase family. PSD-B subfamily. Prokaryotic type II sub-subfamily. As to quaternary structure, heterodimer of a large membrane-associated beta subunit and a small pyruvoyl-containing alpha subunit. Pyruvate serves as cofactor. In terms of processing, is synthesized initially as an inactive proenzyme. Formation of the active enzyme involves a self-maturation process in which the active site pyruvoyl group is generated from an internal serine residue via an autocatalytic post-translational modification. Two non-identical subunits are generated from the proenzyme in this reaction, and the pyruvate is formed at the N-terminus of the alpha chain, which is derived from the carboxyl end of the proenzyme. The autoendoproteolytic cleavage occurs by a canonical serine protease mechanism, in which the side chain hydroxyl group of the serine supplies its oxygen atom to form the C-terminus of the beta chain, while the remainder of the serine residue undergoes an oxidative deamination to produce ammonia and the pyruvoyl prosthetic group on the alpha chain. During this reaction, the Ser that is part of the protease active site of the proenzyme becomes the pyruvoyl prosthetic group, which constitutes an essential element of the active site of the mature decarboxylase.

The protein localises to the cell membrane. The enzyme catalyses a 1,2-diacyl-sn-glycero-3-phospho-L-serine + H(+) = a 1,2-diacyl-sn-glycero-3-phosphoethanolamine + CO2. Its pathway is phospholipid metabolism; phosphatidylethanolamine biosynthesis; phosphatidylethanolamine from CDP-diacylglycerol: step 2/2. In terms of biological role, catalyzes the formation of phosphatidylethanolamine (PtdEtn) from phosphatidylserine (PtdSer). In Clostridium tetani (strain Massachusetts / E88), this protein is Phosphatidylserine decarboxylase proenzyme.